Here is a 549-residue protein sequence, read N- to C-terminus: MLNQKIQNPNPDELMIEVDLCYELDPYELKLDEMIEAEPEPEMIEGLPASDALTPADRYLELFEHVQSAKIFPDSKTFPDCAPKMDPLDILIRYRKVRRHRDFDLRKFVENHFWLPEVYSREYVSDPQNSLKEHIDQLWPVLTREPQDHIPWSSLLALPQSYIVPGGRFSETYYWDSYFTMLGLAESGREDLLKCMADNFAWMIENYGHIPNGNRTYYLSRSQPPVFALMVELFEEDGVRGARRYLDHLKMEYAFWMDGAESLIPNQAYRHVVRMPDGSLLNRYWDDRDTPRDESWLEDVETAKHSGRPPNEVYRDLRAGAASGWDYSSRWLRDTGRLASIRTTQFIPIDLNAFLFKLESAIANISALKGEKETEALFRQKASARRDAVNRYLWDDENGIYRDYDWRREQLALFSAAAIVPLYVGMANHEQADRLANAVRSRLLTPGGILASEYETGEQWDKPNGWAPLQWMAIQGFKMYGDDLLGDEIARSWLKTVNQFYLEQHKMIEKYHIADGVPREGGGGEYPLQDGFGWTNGVVRRLIGLYGEP.

Substrate contacts are provided by residues Arg168, 175–176, Asn212, 221–223, 292–294, and Gly324; these read WD, RSQ, and RDE. Residues Asp326 and Glu509 each act as proton donor/acceptor in the active site. Glu525 is a substrate binding site.

The protein belongs to the glycosyl hydrolase 37 family. In terms of assembly, monomer.

Its subcellular location is the cytoplasm. The catalysed reaction is alpha,alpha-trehalose + H2O = alpha-D-glucose + beta-D-glucose. It participates in glycan degradation; trehalose degradation; D-glucose from alpha,alpha-trehalose: step 1/1. Functionally, hydrolyzes trehalose to glucose. Could be involved, in cells returning to low osmolarity conditions, in the utilization of the accumulated cytoplasmic trehalose, which was synthesized in response to high osmolarity. The protein is Cytoplasmic trehalase of Escherichia coli (strain 55989 / EAEC).